The sequence spans 213 residues: ATP phosphoribosyltransferase (213 aa).

This sequence belongs to the ATP phosphoribosyltransferase family. Short subfamily. In terms of assembly, heteromultimer composed of HisG and HisZ subunits.

The protein resides in the cytoplasm. It catalyses the reaction 1-(5-phospho-beta-D-ribosyl)-ATP + diphosphate = 5-phospho-alpha-D-ribose 1-diphosphate + ATP. It functions in the pathway amino-acid biosynthesis; L-histidine biosynthesis; L-histidine from 5-phospho-alpha-D-ribose 1-diphosphate: step 1/9. Catalyzes the condensation of ATP and 5-phosphoribose 1-diphosphate to form N'-(5'-phosphoribosyl)-ATP (PR-ATP). Has a crucial role in the pathway because the rate of histidine biosynthesis seems to be controlled primarily by regulation of HisG enzymatic activity. The chain is ATP phosphoribosyltransferase from Bacillus velezensis (strain DSM 23117 / BGSC 10A6 / LMG 26770 / FZB42) (Bacillus amyloliquefaciens subsp. plantarum).